We begin with the raw amino-acid sequence, 967 residues long: Leucine-rich repeat-containing G-protein coupled receptor 6 (967 aa).

A signal peptide spans 1-24; that stretch reads MPSPPGLRALWLCAALCASRRAGG. Residues 25 to 567 lie on the Extracellular side of the membrane; it reads APQPGPGPTA…LFESWGIRLA (543 aa). One can recognise an LRRNT domain in the interval 26-66; that stretch reads PQPGPGPTACPAPCHCQEDGIMLSADCSELGLSAVPGDLDP. N-linked (GlcNAc...) asparagine glycosylation occurs at N77. LRR repeat units follow at residues 91–112, 115–136, 139–160, 163–186, 187–208, 211–232, 235–256, 258–279, 282–303, 306–328, 329–350, 353–374, 375–396, 399–420, and 423–443; these read FLEELRLSGNHLSHIPGQAFSG, SLKILMLQNNQLGGIPAEALWE, SLQSLRLDANLISLVPERSFEG, SLRHLWLDDNALTEIPVRALNNLP, ALQAMTLALNRISHIPDYAFQN, SLVVLHLHNNRIQHLGTHSFEG, NLETLDLNYNKLQEFPVAIRTL, RLQELGFHNNNIKAIPEKAFMG, LLQTIHFYDNPIQFVGRSAFQY, KLHTLSLNGAMDIQEFPDLKGTT, SLEILTLTRAGIRLLPSGMCQQ, RLRVLELSHNQIEELPSLHRCQ, KLEEIGLQHNRIWEIGADTFSQ, SLQALDLSWNAIRSIHPEAFST, and SLVKLDLTDNQLTTLPLAGLG. An N-linked (GlcNAc...) asparagine glycan is attached at N208. The chain crosses the membrane as a helical span at residues 568–588; that stretch reads VWAIVLLSVLCNGLVLLTVFA. The Cytoplasmic segment spans residues 589–598; sequence GGPVPLPPVK. Residues 599–619 form a helical membrane-spanning segment; the sequence is FVVGAIAGANTLTGISCGLLA. The Extracellular segment spans residues 620–644; that stretch reads SVDALTFGQFSEYGARWETGLGCRA. C642 and C717 are oxidised to a cystine. The chain crosses the membrane as a helical span at residues 645–665; that stretch reads TGFLAVLGSEASVLLLTLAAV. The Cytoplasmic portion of the chain corresponds to 666–687; it reads QCSVSVSCVRAYGKSPSLGSVR. Residues 688 to 708 form a helical membrane-spanning segment; it reads AGVLGCLALAGLAAALPLASV. Residues 709–727 lie on the Extracellular side of the membrane; that stretch reads GEYGASPLCLPYAPPEGQP. Residues 728-748 traverse the membrane as a helical segment; it reads AALGFTVALVMMNSFCFLVVA. Residues 749-774 are Cytoplasmic-facing; that stretch reads GAYIKLYCDLPRGDFEAVWDCAMVRH. The helical transmembrane segment at 775–795 threads the bilayer; the sequence is VAWLIFADGLLYCPVAFLSFA. At 796-809 the chain is on the extracellular side; the sequence is SMLGLFPVTPEAVK. Residues 810–830 traverse the membrane as a helical segment; sequence SVLLVVLPLPACLNPLLYLLF. At 831–967 the chain is on the cytoplasmic side; that stretch reads NPHFRDDLRR…PSGLAFASHV (137 aa).

Belongs to the G-protein coupled receptor 1 family.

It localises to the cell membrane. In terms of biological role, receptor for R-spondins that potentiates the canonical Wnt signaling pathway and acts as a marker of multipotent stem cells in the epidermis. Upon binding to R-spondins (RSPO1, RSPO2, RSPO3 or RSPO4), associates with phosphorylated LRP6 and frizzled receptors that are activated by extracellular Wnt receptors, triggering the canonical Wnt signaling pathway to increase expression of target genes. In contrast to classical G-protein coupled receptors, does not activate heterotrimeric G-proteins to transduce the signal. May act as a tumor suppressor. This is Leucine-rich repeat-containing G-protein coupled receptor 6 (LGR6) from Homo sapiens (Human).